Consider the following 681-residue polypeptide: Amine oxidase [copper-containing] alpha 3, peroxisomal (681 aa).

323–334 provides a ligand contact to substrate; sequence YLDCGDFGCGQC. The active-site Proton acceptor is the D325. A disulfide bridge links C344 with C370. 410–415 provides a ligand contact to substrate; it reads VGNYDY. Y413 serves as the catalytic Schiff-base intermediate with substrate; via topaquinone. The residue at position 413 (Y413) is a 2',4',5'-topaquinone. Cu cation-binding residues include H470 and H472. Residues D481, D621, and I622 each contribute to the Mn(2+) site. H632 lines the Cu cation pocket.

It belongs to the copper/topaquinone oxidase family. Post-translationally, topaquinone (TPQ) is generated by copper-dependent autoxidation of a specific tyrosyl residue. Mostly expressed in stems, and, at lower levels, in flowers and leaves. Mainly detectable in stipules, hypocotyls and roots.

It localises to the peroxisome. It catalyses the reaction a primary methyl amine + O2 + H2O = an aldehyde + H2O2 + NH4(+). The protein operates within amine and polyamine degradation; putrescine degradation. Functionally, copper amine oxidase that can use putrescine and spermidine as substrates. Involved in putrescine catabolism in peroxisomes. The sequence is that of Amine oxidase [copper-containing] alpha 3, peroxisomal from Arabidopsis thaliana (Mouse-ear cress).